We begin with the raw amino-acid sequence, 201 residues long: Probable molybdenum cofactor guanylyltransferase (201 aa).

GTP contacts are provided by residues 16-18 (LAG), K28, D75, and D107. D107 is a binding site for Mg(2+).

Belongs to the MobA family. The cofactor is Mg(2+).

It is found in the cytoplasm. It carries out the reaction Mo-molybdopterin + GTP + H(+) = Mo-molybdopterin guanine dinucleotide + diphosphate. Functionally, transfers a GMP moiety from GTP to Mo-molybdopterin (Mo-MPT) cofactor (Moco or molybdenum cofactor) to form Mo-molybdopterin guanine dinucleotide (Mo-MGD) cofactor. This Mycobacterium ulcerans (strain Agy99) protein is Probable molybdenum cofactor guanylyltransferase.